A 186-amino-acid polypeptide reads, in one-letter code: MSQVYSVAVVVGSLRKESYNRKVARALSELAPSSLALKIVEIGDLPLYNEDIEAEAPPETWKRFRDEIRRSDAVLFVTPEYNRSVPGCLKNAIDVGSRPYGQSAWSGKPTAVVSVSPGAIGGFGANHAVRQSLVFLDMPCMQMPEAYLGGAASLFEDSGKLNDKTRPFLQAFVDRFASWVKLNRAV.

Residues 13–20 (SLRKESYN), 80–83 (EYNR), and Ser-116 contribute to the FMN site.

This sequence belongs to the SsuE family. As to quaternary structure, homotetramer. Dimer of dimers. The tetrameric configuration has a central role in chromate reductase activity. Requires FMN as cofactor.

It carries out the reaction a quinone + NADH + H(+) = a quinol + NAD(+). The enzyme catalyses a quinone + NADPH + H(+) = a quinol + NADP(+). The catalysed reaction is Cr(6+) + 2 NADH + O2 = Cr(3+) + superoxide + 2 NAD(+) + 2 H(+). It catalyses the reaction Cr(6+) + 2 NADPH + O2 = Cr(3+) + superoxide + 2 NADP(+) + 2 H(+). With respect to regulation, may be inhibited by divalent cations. In terms of biological role, catalyzes the reduction of quinones. Acts by simultaneous two-electron transfer, avoiding formation of highly reactive semiquinone intermediates and producing quinols that promote tolerance of H(2)O(2). Quinone reduction is probably the primary biological role of ChrR. Can also reduce toxic chromate to insoluble and less toxic Cr(3+). Catalyzes the transfer of three electrons to Cr(6+) producing Cr(3+) and one electron to molecular oxygen. This reaction produces transiently a minimal amount of the toxic Cr(5+) species and reactive oxygen species (ROS). Chromate reduction protects the cell against chromate toxicity, but is likely a secondary activity. Can also reduce potassium ferricyanide and 2,6-dichloroindophenol. During chromate reduction, displays an eightfold preference for NADH over NADPH. The polypeptide is Quinone reductase (Pseudomonas putida (strain ATCC 47054 / DSM 6125 / CFBP 8728 / NCIMB 11950 / KT2440)).